We begin with the raw amino-acid sequence, 962 residues long: Glycine dehydrogenase (decarboxylating) (962 aa).

N6-(pyridoxal phosphate)lysine is present on K709.

The protein belongs to the GcvP family. In terms of assembly, the glycine cleavage system is composed of four proteins: P, T, L and H. It depends on pyridoxal 5'-phosphate as a cofactor.

It catalyses the reaction N(6)-[(R)-lipoyl]-L-lysyl-[glycine-cleavage complex H protein] + glycine + H(+) = N(6)-[(R)-S(8)-aminomethyldihydrolipoyl]-L-lysyl-[glycine-cleavage complex H protein] + CO2. Functionally, the glycine cleavage system catalyzes the degradation of glycine. The P protein binds the alpha-amino group of glycine through its pyridoxal phosphate cofactor; CO(2) is released and the remaining methylamine moiety is then transferred to the lipoamide cofactor of the H protein. The sequence is that of Glycine dehydrogenase (decarboxylating) from Shewanella sp. (strain MR-7).